The following is a 187-amino-acid chain: Elongation factor P (187 aa).

This sequence belongs to the elongation factor P family.

The protein resides in the cytoplasm. It functions in the pathway protein biosynthesis; polypeptide chain elongation. In terms of biological role, involved in peptide bond synthesis. Stimulates efficient translation and peptide-bond synthesis on native or reconstituted 70S ribosomes in vitro. Probably functions indirectly by altering the affinity of the ribosome for aminoacyl-tRNA, thus increasing their reactivity as acceptors for peptidyl transferase. This chain is Elongation factor P, found in Parafrankia sp. (strain EAN1pec).